We begin with the raw amino-acid sequence, 143 residues long: uncharacterized protein (143 aa).

The N-terminal stretch at 1–24 (MKKMLMLAFTFLLALTIHVGEASA) is a signal peptide.

This is an uncharacterized protein from Bacillus subtilis (strain 168).